We begin with the raw amino-acid sequence, 48 residues long: Ribulose bisphosphate carboxylase large chain (48 aa).

This sequence belongs to the RuBisCO large chain family. Type I subfamily. As to quaternary structure, heterohexadecamer of 8 large chains and 8 small chains.

The protein resides in the plastid. It is found in the chloroplast. The enzyme catalyses 2 (2R)-3-phosphoglycerate + 2 H(+) = D-ribulose 1,5-bisphosphate + CO2 + H2O. It catalyses the reaction D-ribulose 1,5-bisphosphate + O2 = 2-phosphoglycolate + (2R)-3-phosphoglycerate + 2 H(+). In terms of biological role, ruBisCO catalyzes two reactions: the carboxylation of D-ribulose 1,5-bisphosphate, the primary event in carbon dioxide fixation, as well as the oxidative fragmentation of the pentose substrate in the photorespiration process. Both reactions occur simultaneously and in competition at the same active site. In Pinus pinaster (Maritime pine), this protein is Ribulose bisphosphate carboxylase large chain (rbcL).